A 610-amino-acid chain; its full sequence is Autophagy-related protein 22-1 (610 aa).

Positions 1–29 (MIFTSTPPAPPPADAQQRQPRYPGEDTTP) are disordered. Residues 41-61 (YGIAAEVFAVCGVGSFLPLTL) form a helical membrane-spanning segment. A glycan (N-linked (GlcNAc...) asparagine) is linked at asparagine 90. Helical transmembrane passes span 120–140 (SFAM…LISF), 153–173 (LLLT…FISP), and 177–197 (ILGA…FVVL). The segment at 216 to 242 (KTEGEELPHLDSSGEYTRSGSFNRGDN) is disordered. Residues 229 to 239 (GEYTRSGSFNR) show a composition bias toward polar residues. The next 4 membrane-spanning stretches (helical) occupy residues 277-297 (GVGL…LLLF), 310-330 (TLPL…FTVV), 379-399 (VVIF…VSGT), and 415-435 (VGLL…LWPV). N-linked (GlcNAc...) asparagine glycosylation is present at asparagine 445. A run of 4 helical transmembrane segments spans residues 450 to 470 (LCIA…IPLV), 485 to 507 (FPLG…SFFG), 527 to 547 (KGSS…TGQV), and 550 to 570 (GFFF…MVNA). The disordered stretch occupies residues 586-610 (KSHGENSSEFGHPSEEAEGLLARNP). N-linked (GlcNAc...) asparagine glycosylation is present at asparagine 591.

This sequence belongs to the ATG22 family.

Its subcellular location is the vacuole membrane. Functionally, vacuolar effluxer which mediate the efflux of amino acids resulting from autophagic degradation. The release of autophagic amino acids allows the maintenance of protein synthesis and viability during nitrogen starvation. This Aspergillus clavatus (strain ATCC 1007 / CBS 513.65 / DSM 816 / NCTC 3887 / NRRL 1 / QM 1276 / 107) protein is Autophagy-related protein 22-1 (atg22-1).